The primary structure comprises 671 residues: Carbohydrate acetyl esterase/feruloyl esterase (671 aa).

The first 24 residues, Met1 to Ala24, serve as a signal peptide directing secretion. The tract at residues Met1–Gly296 is carbohydrate acetyl esterase. Active-site for acetyl esterase activity residues include Ser55, Asp271, and His274. Residues Tyr297–Lys671 are feruloyl esterase.

This sequence in the N-terminal section; belongs to the carbohydrate esterase 6 family.

The catalysed reaction is feruloyl-polysaccharide + H2O = ferulate + polysaccharide.. It participates in glycan degradation; xylan degradation. Its function is as follows. Involved in degradation of plant cell wall polysaccharides. Bifunctional esterase that possesses both acetyl esterase and ferulic acid esterase activities. Has deacetylase activity towards acetylated xylo-oligosaccharides smaller than xylo-heptaose, as well as from glucose-pentaacetate. Is also able to release ferulic acid from methylferulate, and from the more natural substrates wheat bran, corn fiber, and XOS(FA,Ac), a corn fiber-derived substrate enriched in O-acetyl and ferulic acid esters. This Xylanibacter ruminicola (strain ATCC 19189 / DSM 19721 / CIP 105475 / JCM 8958 / 23) (Prevotella ruminicola) protein is Carbohydrate acetyl esterase/feruloyl esterase.